Reading from the N-terminus, the 554-residue chain is Apyrase (554 aa).

A signal peptide spans 1 to 21 (MFKITVFIYVLQLILPSKVHS). Positions 43, 45, 92, 124, 224, and 248 each coordinate a divalent metal cation. 6 residues coordinate AMP: arginine 358, asparagine 394, arginine 399, phenylalanine 418, phenylalanine 504, and aspartate 510.

Belongs to the 5'-nucleotidase family. A divalent metal cation is required as a cofactor. As to expression, salivary gland (at protein level).

Its subcellular location is the secreted. The catalysed reaction is a ribonucleoside 5'-triphosphate + 2 H2O = a ribonucleoside 5'-phosphate + 2 phosphate + 2 H(+). Facilitates hematophagy by inhibiting ADP-dependent platelet aggregation in the host. Cleaves adenosine triphosphate (ATP) and adenosine diphosphate (ADP) to adenosine monophosphate (AMP) and inorganic phosphate. Shows potential for antithrombotic activity. Can induce basophil activation. May reduce probing time by facilitating the speed of locating blood. The chain is Apyrase from Tabanus yao (Horsefly).